We begin with the raw amino-acid sequence, 556 residues long: 2-succinyl-5-enolpyruvyl-6-hydroxy-3-cyclohexene-1-carboxylate synthase (556 aa).

It belongs to the TPP enzyme family. MenD subfamily. Homodimer. Mg(2+) is required as a cofactor. Mn(2+) serves as cofactor. The cofactor is thiamine diphosphate.

The catalysed reaction is isochorismate + 2-oxoglutarate + H(+) = 5-enolpyruvoyl-6-hydroxy-2-succinyl-cyclohex-3-ene-1-carboxylate + CO2. It functions in the pathway quinol/quinone metabolism; 1,4-dihydroxy-2-naphthoate biosynthesis; 1,4-dihydroxy-2-naphthoate from chorismate: step 2/7. It participates in quinol/quinone metabolism; menaquinone biosynthesis. In terms of biological role, catalyzes the thiamine diphosphate-dependent decarboxylation of 2-oxoglutarate and the subsequent addition of the resulting succinic semialdehyde-thiamine pyrophosphate anion to isochorismate to yield 2-succinyl-5-enolpyruvyl-6-hydroxy-3-cyclohexene-1-carboxylate (SEPHCHC). The protein is 2-succinyl-5-enolpyruvyl-6-hydroxy-3-cyclohexene-1-carboxylate synthase of Salmonella choleraesuis (strain SC-B67).